We begin with the raw amino-acid sequence, 115 residues long: Histidine-rich carboxyl terminus protein 1 (115 aa).

A helical membrane pass occupies residues Ala-9 to Ala-29. Residues Gly-86–Arg-115 are disordered. Positions Leu-87 to Arg-115 are enriched in basic residues.

It localises to the membrane. The sequence is that of Histidine-rich carboxyl terminus protein 1 (HRCT1) from Homo sapiens (Human).